The sequence spans 178 residues: NAD(P)H-quinone oxidoreductase subunit 6, chloroplastic (178 aa).

A run of 5 helical transmembrane segments spans residues 10–30 (FILV…VLFT), 32–52 (PIYS…FYIL), 61–81 (AQLL…VMFM), 94–114 (LWTI…FSLI), and 154–174 (FFLP…GAIA).

Belongs to the complex I subunit 6 family. In terms of assembly, NDH is composed of at least 16 different subunits, 5 of which are encoded in the nucleus.

It is found in the plastid. The protein resides in the chloroplast thylakoid membrane. The catalysed reaction is a plastoquinone + NADH + (n+1) H(+)(in) = a plastoquinol + NAD(+) + n H(+)(out). The enzyme catalyses a plastoquinone + NADPH + (n+1) H(+)(in) = a plastoquinol + NADP(+) + n H(+)(out). In terms of biological role, NDH shuttles electrons from NAD(P)H:plastoquinone, via FMN and iron-sulfur (Fe-S) centers, to quinones in the photosynthetic chain and possibly in a chloroplast respiratory chain. The immediate electron acceptor for the enzyme in this species is believed to be plastoquinone. Couples the redox reaction to proton translocation, and thus conserves the redox energy in a proton gradient. The protein is NAD(P)H-quinone oxidoreductase subunit 6, chloroplastic (ndhG) of Citrus sinensis (Sweet orange).